The sequence spans 517 residues: Succinyl-CoA:3-ketoacid coenzyme A transferase 2, mitochondrial (517 aa).

The N-terminal 39 residues, 1–39 (MAALRLLASVLGRGVPAGGSGLALSQGCARCFATSPRLR), are a transit peptide targeting the mitochondrion. E341 functions as the 5-glutamyl coenzyme A thioester intermediate in the catalytic mechanism.

It belongs to the 3-oxoacid CoA-transferase family. As to quaternary structure, homodimer. In terms of tissue distribution, testis specific.

The protein localises to the mitochondrion. The catalysed reaction is a 3-oxo acid + succinyl-CoA = a 3-oxoacyl-CoA + succinate. The protein operates within ketone metabolism; succinyl-CoA degradation; acetoacetyl-CoA from succinyl-CoA: step 1/1. In terms of biological role, key enzyme for ketone body catabolism. Transfers the CoA moiety from succinate to acetoacetate. Formation of the enzyme-CoA intermediate proceeds via an unstable anhydride species formed between the carboxylate groups of the enzyme and substrate. In Homo sapiens (Human), this protein is Succinyl-CoA:3-ketoacid coenzyme A transferase 2, mitochondrial (OXCT2).